A 465-amino-acid chain; its full sequence is Cysteine--tRNA ligase (465 aa).

Residue cysteine 30 coordinates Zn(2+). A 'HIGH' region motif is present at residues 32–42 (ITVYDYCHVGH). Residues cysteine 214, histidine 239, and glutamate 243 each contribute to the Zn(2+) site. Positions 271-275 (KMSKS) match the 'KMSKS' region motif. Position 274 (lysine 274) interacts with ATP.

Belongs to the class-I aminoacyl-tRNA synthetase family. In terms of assembly, monomer. Requires Zn(2+) as cofactor.

The protein resides in the cytoplasm. It carries out the reaction tRNA(Cys) + L-cysteine + ATP = L-cysteinyl-tRNA(Cys) + AMP + diphosphate. The sequence is that of Cysteine--tRNA ligase from Burkholderia cenocepacia (strain ATCC BAA-245 / DSM 16553 / LMG 16656 / NCTC 13227 / J2315 / CF5610) (Burkholderia cepacia (strain J2315)).